Reading from the N-terminus, the 191-residue chain is Fe/S biogenesis protein NfuA (191 aa).

[4Fe-4S] cluster is bound by residues cysteine 149 and cysteine 152.

This sequence belongs to the NfuA family. Homodimer. The cofactor is [4Fe-4S] cluster.

Functionally, involved in iron-sulfur cluster biogenesis. Binds a 4Fe-4S cluster, can transfer this cluster to apoproteins, and thereby intervenes in the maturation of Fe/S proteins. Could also act as a scaffold/chaperone for damaged Fe/S proteins. The sequence is that of Fe/S biogenesis protein NfuA from Enterobacter sp. (strain 638).